Here is a 98-residue protein sequence, read N- to C-terminus: Feather keratin 4 (98 aa).

Ser-2 is subject to N-acetylserine.

Belongs to the avian keratin family. As to quaternary structure, the avian keratins (F-ker, S-ker, C-ker and B-ker) are a complex mixture of very similar polypeptides.

This Gallus gallus (Chicken) protein is Feather keratin 4.